Here is a 370-residue protein sequence, read N- to C-terminus: Gap junction delta-4 protein (370 aa).

At 1–19 the chain is on the cytoplasmic side; that stretch reads MEGVDLLGFLIITLNCNVT. The helical transmembrane segment at 20–40 threads the bilayer; the sequence is MXGKLWFVLTMLLRMLVIVLA. Topologically, residues 41–76 are extracellular; the sequence is GRPVYQDEQERFVCNTLQPGCANVCYDVFSPVSHLR. A helical membrane pass occupies residues 77-97; that stretch reads FWLIQGVCVLLPSAVFSVYVL. Residues 98–146 lie on the Cytoplasmic side of the membrane; the sequence is HRGATLAALGPRRCPEPRDTASGQRRCPGSCRERGGLEVPDFSAGYIIH. A helical transmembrane segment spans residues 147–167; it reads LLLRTLLEAAFGALNYLLFGF. At 168–196 the chain is on the extracellular side; that stretch reads LAPNKFPCTRPPCTGVVDCYVSRPTEKSL. The chain crosses the membrane as a helical span at residues 197-217; sequence LMLFLWAVSALSFLLGLADLV. Topologically, residues 218–370 are cytoplasmic; it reads CSLRRLMRRR…HLRARKSEWV (153 aa). A disordered region spans residues 227–370; that stretch reads RPGPPTSPSI…HLRARKSEWV (144 aa). Residues 246 to 260 are compositionally biased toward basic and acidic residues; the sequence is PEGRPTDKEGGREQE. Residues 331 to 345 show a composition bias toward low complexity; the sequence is PSAAPSHLAAHPSCS.

It belongs to the connexin family. Delta-type subfamily. As to quaternary structure, a connexon is composed of a hexamer of connexins.

It is found in the cell membrane. It localises to the cell junction. The protein localises to the gap junction. One gap junction consists of a cluster of closely packed pairs of transmembrane channels, the connexons, through which materials of low MW diffuse from one cell to a neighboring cell. The polypeptide is Gap junction delta-4 protein (GJD4) (Macaca fascicularis (Crab-eating macaque)).